A 154-amino-acid polypeptide reads, in one-letter code: 17.6 kDa class I heat shock protein (154 aa).

Residues 40–154 (ETSAFANTRI…PDVKSIEISG (115 aa)) enclose the sHSP domain.

The protein belongs to the small heat shock protein (HSP20) family. As to quaternary structure, forms oligomeric structures.

The protein localises to the cytoplasm. The protein is 17.6 kDa class I heat shock protein of Solanum peruvianum (Peruvian tomato).